The chain runs to 142 residues: Large ribosomal subunit protein uL11 (142 aa).

The protein belongs to the universal ribosomal protein uL11 family. Part of the ribosomal stalk of the 50S ribosomal subunit. Interacts with L10 and the large rRNA to form the base of the stalk. L10 forms an elongated spine to which L12 dimers bind in a sequential fashion forming a multimeric L10(L12)X complex. One or more lysine residues are methylated.

Forms part of the ribosomal stalk which helps the ribosome interact with GTP-bound translation factors. The sequence is that of Large ribosomal subunit protein uL11 from Dichelobacter nodosus (strain VCS1703A).